The chain runs to 729 residues: Fatty acid oxidation complex subunit alpha (729 aa).

The enoyl-CoA hydratase/isomerase stretch occupies residues 1–189 (MLYKGDTLYL…KIGLVDGVVA (189 aa)). Residue Asp296 coordinates substrate. Residues 311–729 (ETPKHAAVLG…ARPVGALKTA (419 aa)) are 3-hydroxyacyl-CoA dehydrogenase. Residues Met324, Asp343, 400 to 402 (VVE), Lys407, and Ser429 each bind NAD(+). His450 serves as the catalytic For 3-hydroxyacyl-CoA dehydrogenase activity. Asn453 contributes to the NAD(+) binding site. Substrate-binding residues include Asn500 and Tyr660.

It in the N-terminal section; belongs to the enoyl-CoA hydratase/isomerase family. The protein in the C-terminal section; belongs to the 3-hydroxyacyl-CoA dehydrogenase family. In terms of assembly, heterotetramer of two alpha chains (FadB) and two beta chains (FadA).

It catalyses the reaction a (3S)-3-hydroxyacyl-CoA + NAD(+) = a 3-oxoacyl-CoA + NADH + H(+). It carries out the reaction a (3S)-3-hydroxyacyl-CoA = a (2E)-enoyl-CoA + H2O. The catalysed reaction is a 4-saturated-(3S)-3-hydroxyacyl-CoA = a (3E)-enoyl-CoA + H2O. The enzyme catalyses (3S)-3-hydroxybutanoyl-CoA = (3R)-3-hydroxybutanoyl-CoA. It catalyses the reaction a (3Z)-enoyl-CoA = a 4-saturated (2E)-enoyl-CoA. It carries out the reaction a (3E)-enoyl-CoA = a 4-saturated (2E)-enoyl-CoA. It participates in lipid metabolism; fatty acid beta-oxidation. In terms of biological role, involved in the aerobic and anaerobic degradation of long-chain fatty acids via beta-oxidation cycle. Catalyzes the formation of 3-oxoacyl-CoA from enoyl-CoA via L-3-hydroxyacyl-CoA. It can also use D-3-hydroxyacyl-CoA and cis-3-enoyl-CoA as substrate. The sequence is that of Fatty acid oxidation complex subunit alpha from Klebsiella pneumoniae subsp. pneumoniae (strain ATCC 700721 / MGH 78578).